Reading from the N-terminus, the 61-residue chain is Small ribosomal subunit protein uS14 (61 aa).

The Zn(2+) site is built by C24, C27, C40, and C43.

Belongs to the universal ribosomal protein uS14 family. Zinc-binding uS14 subfamily. Part of the 30S ribosomal subunit. Contacts proteins S3 and S10. The cofactor is Zn(2+).

Functionally, binds 16S rRNA, required for the assembly of 30S particles and may also be responsible for determining the conformation of the 16S rRNA at the A site. The polypeptide is Small ribosomal subunit protein uS14 (Mesoplasma florum (strain ATCC 33453 / NBRC 100688 / NCTC 11704 / L1) (Acholeplasma florum)).